A 361-amino-acid chain; its full sequence is PTI1-like tyrosine-protein kinase 1 (361 aa).

The segment at 16-43 is disordered; it reads EEQQLKSSQQQSDANHKNSKPAPVAKHE. A Protein kinase domain is found at 68 to 350; sequence FGSKALIGEG…IVVKALQPLL (283 aa). ATP contacts are provided by residues 74-82 and K96; that span reads IGEGSYGRV. The active-site Proton acceptor is the D200.

This sequence belongs to the protein kinase superfamily. Tyr protein kinase family. In terms of assembly, interacts with OXI1. In terms of processing, autophosphorylated and phosphorylated by OXI1.

It localises to the cell membrane. It catalyses the reaction L-tyrosyl-[protein] + ATP = O-phospho-L-tyrosyl-[protein] + ADP + H(+). In Arabidopsis thaliana (Mouse-ear cress), this protein is PTI1-like tyrosine-protein kinase 1 (PTI11).